Consider the following 490-residue polypeptide: Bifunctional protein HldE (490 aa).

A ribokinase region spans residues 1–330 (MFDFDDLSQA…RKILPHAYRA (330 aa)). 205 to 208 (NRKE) serves as a coordination point for ATP. Aspartate 275 is an active-site residue. Residues 358 to 490 (FTNGCFDILH…LVDRARSDQR (133 aa)) form a cytidylyltransferase region.

In the N-terminal section; belongs to the carbohydrate kinase PfkB family. It in the C-terminal section; belongs to the cytidylyltransferase family. In terms of assembly, homodimer.

It carries out the reaction D-glycero-beta-D-manno-heptose 7-phosphate + ATP = D-glycero-beta-D-manno-heptose 1,7-bisphosphate + ADP + H(+). The enzyme catalyses D-glycero-beta-D-manno-heptose 1-phosphate + ATP + H(+) = ADP-D-glycero-beta-D-manno-heptose + diphosphate. It functions in the pathway nucleotide-sugar biosynthesis; ADP-L-glycero-beta-D-manno-heptose biosynthesis; ADP-L-glycero-beta-D-manno-heptose from D-glycero-beta-D-manno-heptose 7-phosphate: step 1/4. It participates in nucleotide-sugar biosynthesis; ADP-L-glycero-beta-D-manno-heptose biosynthesis; ADP-L-glycero-beta-D-manno-heptose from D-glycero-beta-D-manno-heptose 7-phosphate: step 3/4. Catalyzes the phosphorylation of D-glycero-D-manno-heptose 7-phosphate at the C-1 position to selectively form D-glycero-beta-D-manno-heptose-1,7-bisphosphate. In terms of biological role, catalyzes the ADP transfer from ATP to D-glycero-beta-D-manno-heptose 1-phosphate, yielding ADP-D-glycero-beta-D-manno-heptose. In Bradyrhizobium sp. (strain ORS 278), this protein is Bifunctional protein HldE.